We begin with the raw amino-acid sequence, 443 residues long: Exodeoxyribonuclease 7 large subunit (443 aa).

Belongs to the XseA family. Heterooligomer composed of large and small subunits.

The protein resides in the cytoplasm. It catalyses the reaction Exonucleolytic cleavage in either 5'- to 3'- or 3'- to 5'-direction to yield nucleoside 5'-phosphates.. Bidirectionally degrades single-stranded DNA into large acid-insoluble oligonucleotides, which are then degraded further into small acid-soluble oligonucleotides. The sequence is that of Exodeoxyribonuclease 7 large subunit from Vibrio vulnificus (strain YJ016).